The following is a 180-amino-acid chain: Cytidylate kinase (180 aa).

7 to 15 (GPPGSGTTT) is a binding site for ATP.

This sequence belongs to the cytidylate kinase family. Type 2 subfamily.

It localises to the cytoplasm. The catalysed reaction is CMP + ATP = CDP + ADP. It carries out the reaction dCMP + ATP = dCDP + ADP. The protein is Cytidylate kinase (cmk) of Archaeoglobus fulgidus (strain ATCC 49558 / DSM 4304 / JCM 9628 / NBRC 100126 / VC-16).